The chain runs to 205 residues: MSVKVISPFSQDGVQCFPKLFIISAPAGAGKTTLTHMLQREFPDAFEKTVSSTTRSARPGEVHGVDYLFVSEDDFKQSLDREDFLEWVFLFGTYYGTSKAEISRVLQKGKHCIAVIDVQGALALKKQMPAVTIFIQAPSQEELERRLNARDSEKDFQKKERLEHSAVEIAAASEFDYVVVNDDLITAYQVLRSIFIAEEHRMSHG.

One can recognise a Guanylate kinase-like domain in the interval 18–196; sequence PKLFIISAPA…AYQVLRSIFI (179 aa). 25–32 contacts ATP; sequence APAGAGKT.

It belongs to the guanylate kinase family.

The protein localises to the cytoplasm. It catalyses the reaction GMP + ATP = GDP + ADP. Functionally, essential for recycling GMP and indirectly, cGMP. This chain is Guanylate kinase (gmk), found in Chlamydia trachomatis serovar D (strain ATCC VR-885 / DSM 19411 / UW-3/Cx).